A 308-amino-acid chain; its full sequence is Aspartate carbamoyltransferase catalytic subunit (308 aa).

Arg58 and Thr59 together coordinate carbamoyl phosphate. Residue Lys86 participates in L-aspartate binding. 3 residues coordinate carbamoyl phosphate: Arg108, His136, and Gln139. L-aspartate is bound by residues Arg169 and Arg222. The carbamoyl phosphate site is built by Gly264 and Pro265.

The protein belongs to the aspartate/ornithine carbamoyltransferase superfamily. ATCase family. As to quaternary structure, heterododecamer (2C3:3R2) of six catalytic PyrB chains organized as two trimers (C3), and six regulatory PyrI chains organized as three dimers (R2).

The catalysed reaction is carbamoyl phosphate + L-aspartate = N-carbamoyl-L-aspartate + phosphate + H(+). It functions in the pathway pyrimidine metabolism; UMP biosynthesis via de novo pathway; (S)-dihydroorotate from bicarbonate: step 2/3. In terms of biological role, catalyzes the condensation of carbamoyl phosphate and aspartate to form carbamoyl aspartate and inorganic phosphate, the committed step in the de novo pyrimidine nucleotide biosynthesis pathway. This is Aspartate carbamoyltransferase catalytic subunit from Campylobacter hominis (strain ATCC BAA-381 / DSM 21671 / CCUG 45161 / LMG 19568 / NCTC 13146 / CH001A).